A 174-amino-acid chain; its full sequence is WAP four-disulfide core domain protein 2 (174 aa).

A signal peptide spans 1 to 25; the sequence is MPACRLCLLAAGLLLGLLLFTPISA. Residues 29–74 enclose the WAP 1 domain; the sequence is DAEKPGECPQLEPITDCVLECTLDKDCADNRKCCQAGCSSVCSKPN. Intrachain disulfides connect Cys-36/Cys-62, Cys-45/Cys-66, Cys-49/Cys-61, and Cys-55/Cys-70. The tract at residues 68 to 117 is disordered; it reads SVCSKPNGPSEGELSGTDTKLSETGTTTQSAGLDHTTKPPGGQVSTKPPA. Positions 83–98 are enriched in polar residues; that stretch reads GTDTKLSETGTTTQSA. In terms of domain architecture, WAP 2 spans 125 to 173; that stretch reads VREKQGTCPSVDIPKLGLCEDQCQVDSQCSGNMKCCRNGCGKMACTTPK. 4 cysteine pairs are disulfide-bonded: Cys-132–Cys-160, Cys-143–Cys-164, Cys-147–Cys-159, and Cys-153–Cys-169.

Homotrimer; disulfide-linked.

The protein resides in the secreted. In terms of biological role, broad range protease inhibitor. The polypeptide is WAP four-disulfide core domain protein 2 (Wfdc2) (Mus musculus (Mouse)).